The sequence spans 360 residues: Sphingolipid delta(4)-desaturase (360 aa).

Transmembrane regions (helical) follow at residues Ala-67–Phe-87, Phe-89–His-109, and Leu-125–Tyr-145. The Histidine box-1 signature appears at His-109–His-113. The Histidine box-2 signature appears at His-146–His-150. A run of 3 helical transmembrane segments spans residues Val-170–Leu-190, Phe-202–Gly-222, and Trp-228–Ile-248. The Histidine box-3 signature appears at His-288–His-292.

This sequence belongs to the fatty acid desaturase type 1 family. DEGS subfamily.

Its subcellular location is the membrane. It catalyses the reaction an N-acylsphinganine + 2 Fe(II)-[cytochrome b5] + O2 + 2 H(+) = an N-acylsphing-4-enine + 2 Fe(III)-[cytochrome b5] + 2 H2O. It functions in the pathway lipid metabolism; sphingolipid metabolism. Delta(4)-fatty-acid desaturase which introduces a double bond at the 4-position in the long-chain base (LCB) of ceramides. Required for the formation of the monounsaturated sphingoid base (E)-sphing-4-enine during glucosylceramide (GluCer) biosynthesis. The polypeptide is Sphingolipid delta(4)-desaturase (Komagataella phaffii (strain GS115 / ATCC 20864) (Yeast)).